The sequence spans 341 residues: Eukaryotic translation initiation factor 2 subunit 1 (341 aa).

The S1 motif domain occupies N18–R89. The segment at L301 to K341 is disordered. The span at E303–E330 shows a compositional bias: acidic residues. Over residues E331–K341 the composition is skewed to basic and acidic residues.

This sequence belongs to the eIF-2-alpha family. In terms of assembly, eukaryotic translation initiation factor 2 eIF2 is a heterotrimeric complex composed of an alpha, a beta and a gamma subunit.

Its subcellular location is the cytoplasm. The protein localises to the cytosol. Its function is as follows. eIF-2 functions in the early steps of protein synthesis by forming a ternary complex with GTP and initiator tRNA. This complex binds to a 40S ribosomal subunit, followed by mRNA binding to form a 43S pre-initiation complex. Junction of the 60S ribosomal subunit to form the 80S initiation complex is preceded by hydrolysis of the GTP bound to eIF-2 and release of an eIF-2-GDP binary complex. In order for eIF-2 to recycle and catalyze another round of initiation, the GDP bound to eIF-2 must exchange with GTP by way of a reaction catalyzed by eIF2B. The sequence is that of Eukaryotic translation initiation factor 2 subunit 1 (eif2s1) from Dictyostelium discoideum (Social amoeba).